The sequence spans 84 residues: Small ribosomal subunit protein uS17c (84 aa).

It belongs to the universal ribosomal protein uS17 family. Part of the 30S ribosomal subunit.

It localises to the plastid. Its subcellular location is the chloroplast. Functionally, one of the primary rRNA binding proteins, it binds specifically to the 5'-end of 16S ribosomal RNA. The chain is Small ribosomal subunit protein uS17c (rps17) from Trieres chinensis (Marine centric diatom).